Consider the following 141-residue polypeptide: Hemoglobin subunit alpha (141 aa).

In terms of domain architecture, Globin spans 1-141 (VLSGTDKTNV…VGLVLTAKYR (141 aa)). His-58 serves as a coordination point for O2. Position 87 (His-87) interacts with heme b.

This sequence belongs to the globin family. In terms of assembly, heterotetramer of two alpha chains and two beta chains. In terms of tissue distribution, red blood cells.

Functionally, involved in oxygen transport from the lung to the various peripheral tissues. The polypeptide is Hemoglobin subunit alpha (HBA) (Psittacula krameri (Rose-ringed parakeet)).